Here is a 625-residue protein sequence, read N- to C-terminus: Autophagy-related protein 13b (625 aa).

Composition is skewed to low complexity over residues 322-332 and 455-477; these read PSVSCSPSPTR and PSGV…SSRS. 3 disordered regions span residues 322-388, 452-527, and 544-564; these read PSVS…AVPR, FRRP…YPKK, and PPLR…NNNK. Over residues 498-518 the composition is skewed to basic and acidic residues; that stretch reads ITDRNSRPGSFDHRGDIHEPF.

Belongs to the ATG13 family. Plant subfamily.

The protein resides in the cytoplasmic vesicle. The protein localises to the autophagosome. Functionally, involved in autophagy in a nutritional condition dependent manner. The ATG1-ATG13 protein kinase complex regulates downstream events required for autophagosome enclosure and/or vacuolar delivery. Becomes a target of autophagy under nutrient starvation. Connects autophagy to plant nutritional status. This Arabidopsis thaliana (Mouse-ear cress) protein is Autophagy-related protein 13b.